The chain runs to 767 residues: Serine/threonine-protein kinase DCLK2 (767 aa).

The tract at residues 1–44 (MASTRSIELEHFEERDKRPRPGSRRGAPSSSGGSSISGPKGNGL) is disordered. Residues 7-19 (IELEHFEERDKRP) are compositionally biased toward basic and acidic residues. Residues 24 to 43 (RRGAPSSSGGSSISGPKGNG) are compositionally biased toward low complexity. Thr61 is subject to Phosphothreonine. Doublecortin domains lie at 72–158 (KKAR…VDYT) and 196–279 (KLVT…AQDD). The segment covering 301-311 (KYSGSRSPGLS) has biased composition (low complexity). Residues 301 to 391 (KYSGSRSPGL…GPELDRCMSP (91 aa)) are disordered. A compositionally biased stretch (polar residues) spans 327–338 (SAYSTAKSPVNG). The span at 339–362 (TPSSQLSTPKSTKSSSSSPTSPGS) shows a compositional bias: low complexity. Over residues 369–380 (ISAQGRSSSNVN) the composition is skewed to polar residues. Ser377 carries the phosphoserine modification. Positions 409-666 (YRIGKVIGDG…AGEILSHPWV (258 aa)) constitute a Protein kinase domain. ATP-binding positions include 415–423 (IGDGNFAVV) and Lys438. Catalysis depends on Asp530, which acts as the Proton acceptor. Ser662 carries the post-translational modification Phosphoserine. Thr681 carries the phosphothreonine modification. Positions 721–734 (HCRDSSKSSREQTS) are enriched in basic and acidic residues. The disordered stretch occupies residues 721–767 (HCRDSSKSSREQTSAREAPPPPESPRPPGPPATSGCDPAGTWRRHRD). Residues 738 to 751 (APPPPESPRPPGPP) show a composition bias toward pro residues.

The protein belongs to the protein kinase superfamily. CAMK Ser/Thr protein kinase family. CaMK subfamily. As to quaternary structure, interacts with MAPK8IP1/JIP-1, MAPK8IP2/JIP-2, MAPK9/JNK2, PPP1R9B/NEURABIN-2 and actin. Binds to and stabilizes microtubules; binding affinity is strongly reduced by autophosphorylation. Post-translationally, autophosphorylated.

The protein resides in the cytoplasm. It is found in the cytoskeleton. It catalyses the reaction L-seryl-[protein] + ATP = O-phospho-L-seryl-[protein] + ADP + H(+). The catalysed reaction is L-threonyl-[protein] + ATP = O-phospho-L-threonyl-[protein] + ADP + H(+). Its function is as follows. Protein kinase with a significantly reduced Ca(2+)+/CAM affinity and dependence compared to other members of the CaMK family. May play a role in the down-regulation of CRE-dependent gene activation probably by phosphorylation of the CREB coactivator CRTC2/TORC2 and the resulting retention of TORC2 in the cytoplasm. This Rattus norvegicus (Rat) protein is Serine/threonine-protein kinase DCLK2 (Dclk2).